The primary structure comprises 1032 residues: Beta-galactosidase (1032 aa).

Substrate is bound by residues Asn100 and Asp198. Asp198 is a binding site for Na(+). Glu413, His415, and Glu458 together coordinate Mg(2+). Residues Glu458 and 534–537 (EYAH) contribute to the substrate site. Glu458 (proton donor) is an active-site residue. The Nucleophile role is filled by Glu534. Asn594 is a Mg(2+) binding site. Na(+)-binding residues include Phe598 and Asn601. Substrate contacts are provided by Asn601 and Trp1006.

Belongs to the glycosyl hydrolase 2 family. In terms of assembly, homotetramer. It depends on Mg(2+) as a cofactor. Requires Na(+) as cofactor.

It catalyses the reaction Hydrolysis of terminal non-reducing beta-D-galactose residues in beta-D-galactosides.. This Vibrio vulnificus (strain CMCP6) protein is Beta-galactosidase.